The sequence spans 710 residues: Polyribonucleotide nucleotidyltransferase (710 aa).

Positions 486 and 492 each coordinate Mg(2+). The KH domain maps to 553–612 (PRIHTIKISVDKIKDVIGKGGSVIRALTEETGTTIEIEDDGTVKIAATDGDKAKFAIRRI). The region spanning 622–690 (GRIYNGKVTR…RQGRVRLSIK (69 aa)) is the S1 motif domain. Residues 690-710 (KEAGEQAQPEAEAVPAAPEAE) are disordered. Residues 694-710 (EQAQPEAEAVPAAPEAE) are compositionally biased toward low complexity.

The protein belongs to the polyribonucleotide nucleotidyltransferase family. Component of the RNA degradosome, which is a multiprotein complex involved in RNA processing and mRNA degradation. Requires Mg(2+) as cofactor.

Its subcellular location is the cytoplasm. The enzyme catalyses RNA(n+1) + phosphate = RNA(n) + a ribonucleoside 5'-diphosphate. In terms of biological role, involved in mRNA degradation. Catalyzes the phosphorolysis of single-stranded polyribonucleotides processively in the 3'- to 5'-direction. This chain is Polyribonucleotide nucleotidyltransferase, found in Erwinia tasmaniensis (strain DSM 17950 / CFBP 7177 / CIP 109463 / NCPPB 4357 / Et1/99).